A 152-amino-acid polypeptide reads, in one-letter code: UPF0266 membrane protein YobD (152 aa).

Helical transmembrane passes span 6–26, 45–65, and 67–87; these read LVLI…QFIM, IDSV…VTNH, and ALIT…IFWI.

It belongs to the UPF0266 family.

It localises to the cell inner membrane. The sequence is that of UPF0266 membrane protein YobD from Escherichia coli O45:K1 (strain S88 / ExPEC).